We begin with the raw amino-acid sequence, 303 residues long: Glycine--tRNA ligase alpha subunit (303 aa).

The protein belongs to the class-II aminoacyl-tRNA synthetase family. In terms of assembly, tetramer of two alpha and two beta subunits.

The protein resides in the cytoplasm. It catalyses the reaction tRNA(Gly) + glycine + ATP = glycyl-tRNA(Gly) + AMP + diphosphate. In Erwinia tasmaniensis (strain DSM 17950 / CFBP 7177 / CIP 109463 / NCPPB 4357 / Et1/99), this protein is Glycine--tRNA ligase alpha subunit.